Reading from the N-terminus, the 87-residue chain is Down syndrome critical region protein 10 (87 aa).

This is Down syndrome critical region protein 10 (DSCR10) from Pan troglodytes (Chimpanzee).